A 232-amino-acid chain; its full sequence is Thiamine import ATP-binding protein ThiQ (232 aa).

Residues 2–230 (LKLTDITWLY…KASASAILGI (229 aa)) enclose the ABC transporter domain. 32-39 (GPSGAGKS) provides a ligand contact to ATP.

The protein belongs to the ABC transporter superfamily. Thiamine importer (TC 3.A.1.19.1) family. The complex is composed of two ATP-binding proteins (ThiQ), two transmembrane proteins (ThiP) and a solute-binding protein (ThiB).

Its subcellular location is the cell inner membrane. The catalysed reaction is thiamine(out) + ATP + H2O = thiamine(in) + ADP + phosphate + H(+). Functionally, part of the ABC transporter complex ThiBPQ involved in thiamine import. Responsible for energy coupling to the transport system. The protein is Thiamine import ATP-binding protein ThiQ of Shigella boydii serotype 4 (strain Sb227).